We begin with the raw amino-acid sequence, 166 residues long: Large ribosomal subunit protein uL10 (166 aa).

It belongs to the universal ribosomal protein uL10 family. In terms of assembly, part of the ribosomal stalk of the 50S ribosomal subunit. The N-terminus interacts with L11 and the large rRNA to form the base of the stalk. The C-terminus forms an elongated spine to which L12 dimers bind in a sequential fashion forming a multimeric L10(L12)X complex.

Functionally, forms part of the ribosomal stalk, playing a central role in the interaction of the ribosome with GTP-bound translation factors. The protein is Large ribosomal subunit protein uL10 of Bacillus licheniformis (strain ATCC 14580 / DSM 13 / JCM 2505 / CCUG 7422 / NBRC 12200 / NCIMB 9375 / NCTC 10341 / NRRL NRS-1264 / Gibson 46).